Reading from the N-terminus, the 466-residue chain is MSIQIFNSLSRQKETFVPLEEGKVKMYVCGPTVYNYIHIGNSRPVIVYDTVRRYFQYKGYDVKFVSNFTDVDDKIIKAANELGEEVHELTERFIAAYFEDVTALGCKKADVHPRVTEHMADIIQFIQVLIEKGYAYESAGDVYYRTRKFNGYGKLSHQSVDDLKIGARIEAGEKKDDALDFALWKAAKPGEIFWESPWGNGRPGWHIECSVMAREHLGDTIDIHAGGQDLTFPHHENEIAQSEAHNDKTFARYWMHNGYINIDNEKMSKSLGNFILVNDIRKQIDPQVLRFFMLSVHYRHPINFAKDLVEAASAGLERIRTAYNNVKHRLTTTVSLGDHSDEWLNKITEQKAQFEEAMDDDFNTANGISVLFELARIANIYLNETNTCKKVLETFIETFEVLGDVLGIEFAKEEELLDEEIEALLQERVEARKNRDFARSDEIRDHLQAQGIILEDTRQGTRWKRG.

Residue Cys29 coordinates Zn(2+). The 'HIGH' region motif lies at 31-41 (PTVYNYIHIGN). Residues Cys209, His234, and Glu238 each contribute to the Zn(2+) site. The 'KMSKS' region motif lies at 266-270 (KMSKS). Position 269 (Lys269) interacts with ATP.

This sequence belongs to the class-I aminoacyl-tRNA synthetase family. In terms of assembly, monomer. Zn(2+) serves as cofactor.

It localises to the cytoplasm. It catalyses the reaction tRNA(Cys) + L-cysteine + ATP = L-cysteinyl-tRNA(Cys) + AMP + diphosphate. The polypeptide is Cysteine--tRNA ligase (Lysinibacillus sphaericus (strain C3-41)).